The chain runs to 260 residues: UPF0246 protein BceJ2315_22780 (260 aa).

It belongs to the UPF0246 family.

This Burkholderia cenocepacia (strain ATCC BAA-245 / DSM 16553 / LMG 16656 / NCTC 13227 / J2315 / CF5610) (Burkholderia cepacia (strain J2315)) protein is UPF0246 protein BceJ2315_22780.